Here is a 41-residue protein sequence, read N- to C-terminus: Large ribosomal subunit protein bL36 (41 aa).

This sequence belongs to the bacterial ribosomal protein bL36 family.

The protein is Large ribosomal subunit protein bL36 of Ruegeria pomeroyi (strain ATCC 700808 / DSM 15171 / DSS-3) (Silicibacter pomeroyi).